We begin with the raw amino-acid sequence, 792 residues long: MNEKTHRVLEFDKILDKLKGLTASELGRELVLELTPQTDYRVVEKMLSETNDGVSCIMRRGSPPLGGITDIRMSLKRLDMGGVLNPGELLRLAGVLRAARRLKGYINDKLDENNASVVKELISCLESNQRLEQKIDNCILSEDEIADNASPALSSIRRQIKEQQASIKDKLNSIIRSTKYQKYIQESVVTMRGDRYVIPVKQEHKGDIPGLVHDSSASGATLFIEPMAVVEANNSIKQLRVKEQTEIDRILAELSQDASLVLPQLNANMSIMARLDFIFAKSKLAIDYNCICPKINDTGKIIIKKGRHPLLDPKIVVPIDFWIGEKFSSLIVTGPNTGGKTVSLKTVGLFTLMMQSGLLVPANDGTEMSVFEKIYADIGDEQSIEQSLSTFSSHMKNIVDILSGVNNKSLILLDELGAGTDPTEGAALAMSILECLHQMGATTLATTHYSELKVYAISTTGVENASCEFDVETLRPTYRLLIGVPGKSNAFAISKRLGLTDDIIERSKEFLSQEDIRFEDILLSIEKNRSEAEKEKMRAESYRQEAERLKKDLEDQKRRLAAQKESELRKAREEARRILTDSKRQADELVSEMKRLAKEQEEAEVRRQTEELRQKLNKSINNLDDSLVESIMPRQGLVKPPKNLKPGDTVLIVNLNQKGTVLTLPDKNGEAQVQAGIMKINVHISNLKLVDEQKQQIQRTGMGKIGVSKAQNMSTEIDLRGMMLSEAVDVVDKYLDDASIAGMGGVTLIHGKGTGALRAGLHQHLKHNPHIKSFRLGKLGEGENGVTVVELK.

ATP is bound at residue 334–341 (GPNTGGKT). The 76-residue stretch at 717–792 (IDLRGMMLSE…ENGVTVVELK (76 aa)) folds into the Smr domain.

The protein belongs to the DNA mismatch repair MutS family. MutS2 subfamily. As to quaternary structure, homodimer. Binds to stalled ribosomes, contacting rRNA.

Functionally, endonuclease that is involved in the suppression of homologous recombination and thus may have a key role in the control of bacterial genetic diversity. Its function is as follows. Acts as a ribosome collision sensor, splitting the ribosome into its 2 subunits. Detects stalled/collided 70S ribosomes which it binds and splits by an ATP-hydrolysis driven conformational change. Acts upstream of the ribosome quality control system (RQC), a ribosome-associated complex that mediates the extraction of incompletely synthesized nascent chains from stalled ribosomes and their subsequent degradation. Probably generates substrates for RQC. This Ruminiclostridium cellulolyticum (strain ATCC 35319 / DSM 5812 / JCM 6584 / H10) (Clostridium cellulolyticum) protein is Endonuclease MutS2.